The sequence spans 309 residues: tRNA dimethylallyltransferase (309 aa).

14–21 (GPTASGKS) lines the ATP pocket. Substrate is bound at residue 16–21 (TASGKS). Residues 39–42 (DSMQ) are interaction with substrate tRNA.

This sequence belongs to the IPP transferase family. Monomer. Requires Mg(2+) as cofactor.

It catalyses the reaction adenosine(37) in tRNA + dimethylallyl diphosphate = N(6)-dimethylallyladenosine(37) in tRNA + diphosphate. In terms of biological role, catalyzes the transfer of a dimethylallyl group onto the adenine at position 37 in tRNAs that read codons beginning with uridine, leading to the formation of N6-(dimethylallyl)adenosine (i(6)A). The protein is tRNA dimethylallyltransferase of Geobacter metallireducens (strain ATCC 53774 / DSM 7210 / GS-15).